The chain runs to 424 residues: Enolase (424 aa).

Residue Q162 coordinates (2R)-2-phosphoglycerate. E204 functions as the Proton donor in the catalytic mechanism. The Mg(2+) site is built by D241, E284, and D311. Residues K336, R365, S366, and K387 each contribute to the (2R)-2-phosphoglycerate site. Residue K336 is the Proton acceptor of the active site.

Belongs to the enolase family. Requires Mg(2+) as cofactor.

It is found in the cytoplasm. Its subcellular location is the secreted. The protein localises to the cell surface. The catalysed reaction is (2R)-2-phosphoglycerate = phosphoenolpyruvate + H2O. It functions in the pathway carbohydrate degradation; glycolysis; pyruvate from D-glyceraldehyde 3-phosphate: step 4/5. Catalyzes the reversible conversion of 2-phosphoglycerate (2-PG) into phosphoenolpyruvate (PEP). It is essential for the degradation of carbohydrates via glycolysis. The sequence is that of Enolase from Maricaulis maris (strain MCS10) (Caulobacter maris).